A 323-amino-acid chain; its full sequence is Beta-ketoacyl-[acyl-carrier-protein] synthase III (323 aa).

Residues C113 and H250 contribute to the active site. The tract at residues 251–255 is ACP-binding; sequence QANKR. N280 is an active-site residue.

Belongs to the thiolase-like superfamily. FabH family. As to quaternary structure, homodimer.

It is found in the cytoplasm. The enzyme catalyses malonyl-[ACP] + acetyl-CoA + H(+) = 3-oxobutanoyl-[ACP] + CO2 + CoA. Its pathway is lipid metabolism; fatty acid biosynthesis. Catalyzes the condensation reaction of fatty acid synthesis by the addition to an acyl acceptor of two carbons from malonyl-ACP. Catalyzes the first condensation reaction which initiates fatty acid synthesis and may therefore play a role in governing the total rate of fatty acid production. Possesses both acetoacetyl-ACP synthase and acetyl transacylase activities. Its substrate specificity determines the biosynthesis of branched-chain and/or straight-chain of fatty acids. The polypeptide is Beta-ketoacyl-[acyl-carrier-protein] synthase III (Brucella melitensis biotype 2 (strain ATCC 23457)).